A 121-amino-acid chain; its full sequence is Large ribosomal subunit protein uL14 (121 aa).

This sequence belongs to the universal ribosomal protein uL14 family. In terms of assembly, part of the 50S ribosomal subunit. Forms a cluster with proteins L3 and L19. In the 70S ribosome, L14 and L19 interact and together make contacts with the 16S rRNA in bridges B5 and B8.

In terms of biological role, binds to 23S rRNA. Forms part of two intersubunit bridges in the 70S ribosome. The chain is Large ribosomal subunit protein uL14 from Legionella pneumophila (strain Paris).